Reading from the N-terminus, the 251-residue chain is MTEALYFLDCYLKEFEATVEKVTEGKYIVLDRTAFYPESGGQPSDTGKLVRERDGAEFKVVYAGKFNGDISHEISPEGETGAEGLKVGDKVKGIIDWDRRYRHMRMHTATHVIANVIEKEAGAQITGNQLGLDQSRVDFSLEAFDREKFAEYEKIANEIIAENHSVNLYLVSRKEAEERLSRLTTLAKGFSEEITEVRLVEIEGVTIEACGGSHLKNTGEIKGIKIEKLQNKGKSNRRMYFSLLDQASGLK.

The Zn(2+) site is built by histidine 107, histidine 111, cysteine 210, and histidine 214.

This sequence belongs to the class-II aminoacyl-tRNA synthetase family. Editing domain AlaX-M subfamily. Zn(2+) serves as cofactor.

It localises to the cytoplasm. In terms of biological role, functions in trans to edit the amino acid moiety from mischarged Ser-tRNA(Ala). Recognition depends, at least in part, on the acceptor stem of tRNA(Ala). The chain is Alanyl-tRNA editing protein AlaX-M (alaXM) from Methanosarcina mazei (strain ATCC BAA-159 / DSM 3647 / Goe1 / Go1 / JCM 11833 / OCM 88) (Methanosarcina frisia).